The chain runs to 779 residues: Acyl-homoserine lactone acylase PvdQ (779 aa).

The N-terminal stretch at 1-25 (MIISRPLCSFVFAGLSFAVILPAQA) is a signal peptide. A propeptide spans 202 to 223 (AQQAQALQLAAARNQRFALERG) (spacer peptide). The active-site Nucleophile is the S224. Polar residues predominate over residues 731-746 (ESSNPQSAHSSDQTEA). Residues 731–750 (ESSNPQSAHSSDQTEAFSKK) form a disordered region.

This sequence belongs to the peptidase S45 family. Heterodimer of an alpha subunit and a beta subunit processed from the same precursor.

The protein resides in the periplasm. It carries out the reaction an N-acyl-L-homoserine lactone + H2O = L-homoserine lactone + a carboxylate. Catalyzes the deacylation of acyl-homoserine lactone (AHL or acyl-HSL), releasing homoserine lactone (HSL) and the corresponding fatty acid. Possesses a specificity for the degradation of long-chain acyl-HSLs (side chains of 11 to 14 carbons in length). The polypeptide is Acyl-homoserine lactone acylase PvdQ (pvdQ) (Pseudomonas syringae pv. syringae (strain B728a)).